The chain runs to 93 residues: Large ribosomal subunit protein uL23 (93 aa).

This sequence belongs to the universal ribosomal protein uL23 family. As to quaternary structure, part of the 50S ribosomal subunit. Contacts protein L29, and trigger factor when it is bound to the ribosome.

Functionally, one of the early assembly proteins it binds 23S rRNA. One of the proteins that surrounds the polypeptide exit tunnel on the outside of the ribosome. Forms the main docking site for trigger factor binding to the ribosome. This Campylobacter hominis (strain ATCC BAA-381 / DSM 21671 / CCUG 45161 / LMG 19568 / NCTC 13146 / CH001A) protein is Large ribosomal subunit protein uL23.